A 785-amino-acid polypeptide reads, in one-letter code: Probable cationic amino acid transporter (785 aa).

The next 15 helical transmembrane spans lie at 58–78, 83–103, 119–141, 187–207, 216–236, 251–271, 291–311, 337–357, 360–380, 384–404, 407–427, 568–588, 596–616, 628–648, and 655–675; these read LVSL…SGLV, AGPG…LSGV, AYTY…NLIL, YPDI…ALGV, VLNV…LFFV, WSGV…FDII, ASLV…TLMV, IVAI…LFPM, VIYA…VSTY, PAVA…LVSL, LIEM…VCVL, CVVL…FGSG, WAVL…FIII, MAPC…YLML, and WIRF…YGMW. A disordered region spans residues 715–785; it reads DQGPFQNWGK…VDDDLDDPLE (71 aa). Residues 727–740 show a composition bias toward low complexity; the sequence is QQKQPQQEQSEPQS. Acidic residues predominate over residues 775 to 785; the sequence is VVDDDLDDPLE.

The protein belongs to the amino acid-polyamine-organocation (APC) superfamily.

Its subcellular location is the lysosome membrane. May be involved in arginine transport. This is Probable cationic amino acid transporter (slc7a14a) from Danio rerio (Zebrafish).